A 403-amino-acid polypeptide reads, in one-letter code: Argininosuccinate synthase (403 aa).

ATP-binding positions include Ala13–Ser21 and Ala40. Tyr92 and Ser97 together coordinate L-citrulline. Residue Gly122 coordinates ATP. 3 residues coordinate L-aspartate: Thr124, Asn128, and Asp129. An L-citrulline-binding site is contributed by Asn128. L-citrulline contacts are provided by Arg132, Ser181, Ser190, Glu266, and Tyr278.

This sequence belongs to the argininosuccinate synthase family. Type 1 subfamily. As to quaternary structure, homotetramer.

The protein localises to the cytoplasm. It catalyses the reaction L-citrulline + L-aspartate + ATP = 2-(N(omega)-L-arginino)succinate + AMP + diphosphate + H(+). It participates in amino-acid biosynthesis; L-arginine biosynthesis; L-arginine from L-ornithine and carbamoyl phosphate: step 2/3. This is Argininosuccinate synthase from Aliivibrio fischeri (strain MJ11) (Vibrio fischeri).